We begin with the raw amino-acid sequence, 269 residues long: Achromobactin transport ATP-binding protein CbrD (269 aa).

Residues 4-240 (ITSRELTLGY…ALVKTVFNLD (237 aa)) enclose the ABC transporter domain. 36–43 (GSNGCGKS) is a binding site for ATP.

Belongs to the ABC transporter superfamily.

Its subcellular location is the cell inner membrane. Its function is as follows. Part of the binding-protein-dependent transport system CbrABCD for uptake of the siderophore achromobactin. Probably responsible for energy coupling to the transport system. This is Achromobactin transport ATP-binding protein CbrD (cbrD) from Dickeya dadantii (strain 3937) (Erwinia chrysanthemi (strain 3937)).